The following is an 87-amino-acid chain: uncharacterized protein (87 aa).

The segment at 43-87 (NQGYGQNFGDASGFMGTRSHVDDRDQIDSPASFESEAVNSSIKRK) is disordered.

This is an uncharacterized protein from Bacillus subtilis (strain 168).